Reading from the N-terminus, the 743-residue chain is DNA ligase 2 (743 aa).

Residues 45–49 (DADFD), 94–95 (SL), and E125 contribute to the NAD(+) site. Residue K127 is the N6-AMP-lysine intermediate of the active site. Residues R148, E185, K301, and K325 each coordinate NAD(+). Residues C419, C422, C438, and C444 each contribute to the Zn(2+) site. Residues 639-728 (EGPRPLEGLT…PERAKEAALP (90 aa)) form the BRCT domain. The interval 720–743 (ERAKEAALPVPEAAPAADPENSGE) is disordered. Low complexity predominate over residues 725–743 (AALPVPEAAPAADPENSGE).

The protein belongs to the NAD-dependent DNA ligase family. LigA subfamily. Mg(2+) serves as cofactor. The cofactor is Mn(2+).

It carries out the reaction NAD(+) + (deoxyribonucleotide)n-3'-hydroxyl + 5'-phospho-(deoxyribonucleotide)m = (deoxyribonucleotide)n+m + AMP + beta-nicotinamide D-nucleotide.. DNA ligase that catalyzes the formation of phosphodiester linkages between 5'-phosphoryl and 3'-hydroxyl groups in double-stranded DNA using NAD as a coenzyme and as the energy source for the reaction. It is essential for DNA replication and repair of damaged DNA. This Streptomyces griseus subsp. griseus (strain JCM 4626 / CBS 651.72 / NBRC 13350 / KCC S-0626 / ISP 5235) protein is DNA ligase 2.